The chain runs to 499 residues: Glutamyl-tRNA(Gln) amidotransferase subunit A (499 aa).

Catalysis depends on charge relay system residues K80 and S155. Residue S179 is the Acyl-ester intermediate of the active site.

This sequence belongs to the amidase family. GatA subfamily. Heterotrimer of A, B and C subunits.

It carries out the reaction L-glutamyl-tRNA(Gln) + L-glutamine + ATP + H2O = L-glutaminyl-tRNA(Gln) + L-glutamate + ADP + phosphate + H(+). Functionally, allows the formation of correctly charged Gln-tRNA(Gln) through the transamidation of misacylated Glu-tRNA(Gln) in organisms which lack glutaminyl-tRNA synthetase. The reaction takes place in the presence of glutamine and ATP through an activated gamma-phospho-Glu-tRNA(Gln). This is Glutamyl-tRNA(Gln) amidotransferase subunit A from Cupriavidus metallidurans (strain ATCC 43123 / DSM 2839 / NBRC 102507 / CH34) (Ralstonia metallidurans).